A 258-amino-acid polypeptide reads, in one-letter code: 5'-nucleotidase SurE (258 aa).

Asp-14, Asp-15, Ser-45, and Asn-101 together coordinate a divalent metal cation.

This sequence belongs to the SurE nucleotidase family. Requires a divalent metal cation as cofactor.

The protein localises to the cytoplasm. It carries out the reaction a ribonucleoside 5'-phosphate + H2O = a ribonucleoside + phosphate. Its function is as follows. Nucleotidase that shows phosphatase activity on nucleoside 5'-monophosphates. In Chlorobium limicola (strain DSM 245 / NBRC 103803 / 6330), this protein is 5'-nucleotidase SurE.